A 241-amino-acid chain; its full sequence is Guanosine phosphorylase (241 aa).

This sequence belongs to the PNP/UDP phosphorylase family.

The enzyme catalyses guanosine + phosphate = alpha-D-ribose 1-phosphate + guanine. It carries out the reaction a purine D-ribonucleoside + phosphate = a purine nucleobase + alpha-D-ribose 1-phosphate. It catalyses the reaction inosine + phosphate = alpha-D-ribose 1-phosphate + hypoxanthine. The catalysed reaction is adenosine + phosphate = alpha-D-ribose 1-phosphate + adenine. With respect to regulation, activity is higher at low KCl concentrations. Phosphorylase involved in the non-carboxylating pentose bisphosphate pathway, a nucleoside degradation pathway present in some halophilic archaea. Catalyzes the phosphorolytic cleavage of guanosine to guanine and ribose-1-phosphate (R1P). Exhibits the highest activity toward guanosine, but also shows lower activity against inosine and adenosine. This is Guanosine phosphorylase from Halorubrum lacusprofundi (strain ATCC 49239 / DSM 5036 / JCM 8891 / ACAM 34).